A 346-amino-acid chain; its full sequence is Phospholipase A1 (346 aa).

Residues 1-26 (MRKFAAIFVVFFVQCTHLYSLAQARA) form the signal peptide. A propeptide spanning residues 27–37 (EPDPGVVEYLK) is cleaved from the precursor. N-linked (GlcNAc...) asparagine glycosylation is found at Asn-44 and Asn-72. Ser-167 functions as the Nucleophile in the catalytic mechanism. Asn-185 carries N-linked (GlcNAc...) asparagine glycosylation. Active-site charge relay system residues include Asp-195 and His-258.

Belongs to the AB hydrolase superfamily. Lipase family. In terms of processing, contains six disulfide bonds. N-glycosylated; contains mannose. In terms of tissue distribution, expressed by the venom gland.

It localises to the secreted. The catalysed reaction is a 1,2-diacyl-sn-glycero-3-phosphocholine + H2O = a 2-acyl-sn-glycero-3-phosphocholine + a fatty acid + H(+). Functionally, catalyzes the hydrolysis of phosphatidylcholine with phospholipase A1 activity. Induces hemolytic activity. Acts as an allergen. This Solenopsis invicta (Red imported fire ant) protein is Phospholipase A1.